The primary structure comprises 441 residues: Acidic phosphoprotein (441 aa).

A signal peptide (or 24) is located at residues 1–15 (MKAISLGLISSIIFS). Residues Asn21 and Asn112 are each glycosylated (N-linked (GlcNAc...) asparagine). A run of 18 repeats spans residues 186–193 (EEDPYLLQ), 194–201 (EEDALSLM), 202–209 (EYDAETLN), 210–217 (EGDAETLN), 218–225 (EGDAETLN), 226–233 (EYDAGTLN), 234–241 (EEDAGTTN), 242–249 (EAGEGTTN), 250–257 (EEGEGAAN), 258–265 (EYDAETLN), 266–273 (EYDADTLN), 274–281 (EYDAGTLN), 282–289 (EYDAGTLN), 290–297 (EEEGSTTN), 298–305 (EAGEGTSN), 306–313 (EAGEGTAN), 353–360 (KGNENEGE), and 361–368 (QKGNENEG). The 16 X 8 AA tandem repeats stretch occupies residues 186-313 (EEDPYLLQEE…SNEAGEGTAN (128 aa)). Residues 232–416 (LNEEDAGTTN…EKEKKKEKKV (185 aa)) form a disordered region. Residues 238-247 (GTTNEAGEGT) show a composition bias toward low complexity. A compositionally biased stretch (acidic residues) spans 248 to 273 (TNEEGEGAANEYDAETLNEYDADTLN). Residues 294 to 306 (STTNEAGEGTSNE) show a composition bias toward polar residues. The span at 312–332 (ANDDEELDEEVASIFDDDEHA) shows a compositional bias: acidic residues. Residues 349-371 (ENVKKGNENEGEQKGNENEGEQK) are compositionally biased toward basic and acidic residues. The 2 X 9 AA tandem repeats stretch occupies residues 353-370 (KGNENEGEQKGNENEGEQ). A compositionally biased stretch (basic residues) spans 372-415 (GKKKKAKEKSKKKVKNKPTMTTKKKKKKEKKKKKKEKEKKKEKK).

The protein localises to the cell membrane. During infection, this phosphoprotein probably modulates the structure of the red cell membrane to the advantage of the parasite, although its precise function is not known. This chain is Acidic phosphoprotein (PCEMA1), found in Plasmodium chabaudi.